The sequence spans 309 residues: Oxygen-dependent coproporphyrinogen-III oxidase (309 aa).

Ser94 is a binding site for substrate. A divalent metal cation-binding residues include His98 and His108. The active-site Proton donor is His108. Position 110-112 (110-112) interacts with substrate; it reads NVR. A divalent metal cation contacts are provided by His147 and His177. Residues 242-277 form an important for dimerization region; sequence YVEFNLVWDRGTLFGLQTGGRTESILMSLPPLVRWE. 260 to 262 provides a ligand contact to substrate; it reads GGR.

This sequence belongs to the aerobic coproporphyrinogen-III oxidase family. In terms of assembly, homodimer. A divalent metal cation is required as a cofactor.

The protein resides in the cytoplasm. It catalyses the reaction coproporphyrinogen III + O2 + 2 H(+) = protoporphyrinogen IX + 2 CO2 + 2 H2O. It participates in porphyrin-containing compound metabolism; protoporphyrin-IX biosynthesis; protoporphyrinogen-IX from coproporphyrinogen-III (O2 route): step 1/1. Involved in the heme biosynthesis. Catalyzes the aerobic oxidative decarboxylation of propionate groups of rings A and B of coproporphyrinogen-III to yield the vinyl groups in protoporphyrinogen-IX. This is Oxygen-dependent coproporphyrinogen-III oxidase from Yersinia pestis bv. Antiqua (strain Antiqua).